The sequence spans 399 residues: 4-hydroxyphenylpyruvate dioxygenase (399 aa).

VOC domains are found at residues 23 to 166 (GYDH…LIER) and 197 to 355 (RIDH…LFTK). His200, His283, and Glu366 together coordinate Fe cation.

The protein belongs to the 4HPPD family. Requires Fe cation as cofactor.

The enzyme catalyses 3-(4-hydroxyphenyl)pyruvate + O2 = homogentisate + CO2. The protein operates within amino-acid degradation; L-phenylalanine degradation; acetoacetate and fumarate from L-phenylalanine: step 3/6. The protein is 4-hydroxyphenylpyruvate dioxygenase (TCRP) of Coccidioides posadasii (strain C735) (Valley fever fungus).